The primary structure comprises 129 residues: DNA-directed RNA polymerase II subunit RPB9 (129 aa).

Residues Cys-21, Cys-24, Cys-43, Cys-46, Cys-90, Cys-93, Cys-118, and Cys-123 each coordinate Zn(2+). The C4-type zinc-finger motif lies at 21–46 (CQECNNMLYPKEDKENKILLYACRNC). The segment at 86–128 (EDHACPKCSHREAVFFQAQTRRAEEEMRLYYVCTNQNCTHRWT) adopts a TFIIS-type zinc-finger fold.

The protein belongs to the archaeal RpoM/eukaryotic RPA12/RPB9/RPC11 RNA polymerase family. In terms of assembly, component of the RNA polymerase II (Pol II) complex consisting of 12 subunits.

The protein resides in the nucleus. Its subcellular location is the nucleolus. DNA-dependent RNA polymerase catalyzes the transcription of DNA into RNA using the four ribonucleoside triphosphates as substrates. Component of RNA polymerase II which synthesizes mRNA precursors and many functional non-coding RNAs. Pol II is the central component of the basal RNA polymerase II transcription machinery. It is composed of mobile elements that move relative to each other. RPB9 is part of the upper jaw surrounding the central large cleft and thought to grab the incoming DNA template. The chain is DNA-directed RNA polymerase II subunit RPB9 from Drosophila melanogaster (Fruit fly).